Reading from the N-terminus, the 430-residue chain is Trigger factor (430 aa).

Residues 163-248 enclose the PPIase FKBP-type domain; it reads GNIAIIDFKG…IKDIKVKELP (86 aa).

The protein belongs to the FKBP-type PPIase family. Tig subfamily.

It localises to the cytoplasm. It catalyses the reaction [protein]-peptidylproline (omega=180) = [protein]-peptidylproline (omega=0). Its function is as follows. Involved in protein export. Acts as a chaperone by maintaining the newly synthesized protein in an open conformation. Functions as a peptidyl-prolyl cis-trans isomerase. This chain is Trigger factor, found in Clostridium botulinum (strain Loch Maree / Type A3).